The sequence spans 391 residues: Succinate--CoA ligase [ADP-forming] subunit beta (391 aa).

In terms of domain architecture, ATP-grasp spans 9-248; sequence KDILRKFGVA…ITEEDPFEVE (240 aa). Residues Lys50, 57-59, Glu103, Met106, and Glu111 each bind ATP; that span reads GRG. Mg(2+)-binding residues include Asn203 and Asp217. Substrate contacts are provided by residues Asn268 and 325 to 327; that span reads GIV.

This sequence belongs to the succinate/malate CoA ligase beta subunit family. As to quaternary structure, heterotetramer of two alpha and two beta subunits. It depends on Mg(2+) as a cofactor.

It catalyses the reaction succinate + ATP + CoA = succinyl-CoA + ADP + phosphate. It carries out the reaction GTP + succinate + CoA = succinyl-CoA + GDP + phosphate. It functions in the pathway carbohydrate metabolism; tricarboxylic acid cycle; succinate from succinyl-CoA (ligase route): step 1/1. In terms of biological role, succinyl-CoA synthetase functions in the citric acid cycle (TCA), coupling the hydrolysis of succinyl-CoA to the synthesis of either ATP or GTP and thus represents the only step of substrate-level phosphorylation in the TCA. The beta subunit provides nucleotide specificity of the enzyme and binds the substrate succinate, while the binding sites for coenzyme A and phosphate are found in the alpha subunit. The chain is Succinate--CoA ligase [ADP-forming] subunit beta from Chlorobium phaeovibrioides (strain DSM 265 / 1930) (Prosthecochloris vibrioformis (strain DSM 265)).